Reading from the N-terminus, the 153-residue chain is Glucose-6-phosphate 1-dehydrogenase (153 aa).

2 residues coordinate NADP(+): R21 and K120. K120 provides a ligand contact to D-glucose 6-phosphate.

The protein belongs to the glucose-6-phosphate dehydrogenase family.

Its subcellular location is the cytoplasm. The protein resides in the cytosol. It catalyses the reaction D-glucose 6-phosphate + NADP(+) = 6-phospho-D-glucono-1,5-lactone + NADPH + H(+). It participates in carbohydrate degradation; pentose phosphate pathway; D-ribulose 5-phosphate from D-glucose 6-phosphate (oxidative stage): step 1/3. In terms of biological role, cytosolic glucose-6-phosphate dehydrogenase that catalyzes the first and rate-limiting step of the oxidative branch within the pentose phosphate pathway/shunt, an alternative route to glycolysis for the dissimilation of carbohydrates and a major source of reducing power and metabolic intermediates for fatty acid and nucleic acid biosynthetic processes. This Culex pipiens (House mosquito) protein is Glucose-6-phosphate 1-dehydrogenase (ZW).